The chain runs to 631 residues: Polyadenylate-binding protein 3 (631 aa).

RRM domains follow at residues Ala-11 to Arg-89, Gly-99 to Ser-175, Pro-191 to Lys-268, and Val-294 to Arg-370. Residue Tyr-140 is modified to Phosphotyrosine. A Phosphoserine modification is found at Ser-315. Lys-361 carries the post-translational modification N6,N6-dimethyllysine; alternate. Residue Lys-361 forms a Glycyl lysine isopeptide (Lys-Gly) (interchain with G-Cter in SUMO2); alternate linkage. Tyr-364 is subject to Phosphotyrosine. Residues Arg-426, Arg-430, and Arg-449 each carry the omega-N-methylarginine modification. Arg-501 carries the post-translational modification Dimethylated arginine. Arg-513 bears the Omega-N-methylarginine mark. The region spanning Gln-537–Ala-614 is the PABC domain.

Belongs to the polyadenylate-binding protein type-1 family. In terms of tissue distribution, testis specific.

The protein localises to the cytoplasm. Its function is as follows. Binds the poly(A) tail of mRNA. May be involved in cytoplasmic regulatory processes of mRNA metabolism. Binds poly(A) with a slightly lower affinity as compared to PABPC1. This is Polyadenylate-binding protein 3 (PABPC3) from Homo sapiens (Human).